The primary structure comprises 544 residues: Phosphoenolpyruvate carboxykinase (ATP) (544 aa).

246–253 provides a ligand contact to ATP; the sequence is GLSGTGKT.

The protein belongs to the phosphoenolpyruvate carboxykinase (ATP) family.

The enzyme catalyses oxaloacetate + ATP = phosphoenolpyruvate + ADP + CO2. Its pathway is carbohydrate biosynthesis; gluconeogenesis. The sequence is that of Phosphoenolpyruvate carboxykinase (ATP) (PCK1) from Candida glabrata (strain ATCC 2001 / BCRC 20586 / JCM 3761 / NBRC 0622 / NRRL Y-65 / CBS 138) (Yeast).